The primary structure comprises 190 residues: MAEQNIDDILSNSEKDTKKWYVIHTASGAENRIKRIMLERISKQKMSDFFDDILVPVFGVSEVKRSKNVKVEKKLMPSYILIKMNMTDKSWHLVKNIPGVTGFLGSKTTPKALTESEIQNIRLETEAKEAKDAKLYEVGEIVTVTEGPFETFTGTVEEVDQEKARLKVSVSIFGKATPIELSFTQVKKND.

Positions 138-166 (VGEIVTVTEGPFETFTGTVEEVDQEKARL) constitute a KOW domain.

Belongs to the NusG family.

Participates in transcription elongation, termination and antitermination. In Rickettsia bellii (strain RML369-C), this protein is Transcription termination/antitermination protein NusG.